A 287-amino-acid chain; its full sequence is Cyclopropane mycolic acid synthase 1 (287 aa).

S-adenosyl-L-methionine contacts are provided by residues 33–34, 68–76, 94–99, and 123–124; these read YS, LLDVGCGWG, TLSKNQ, and WE. The active site involves cysteine 269.

It belongs to the CFA/CMAS family. Homodimer.

It localises to the cytoplasm. It carries out the reaction a 1-acyl-2-(9Z)-enoyl-sn-glycero-3-phospholipid + S-adenosyl-L-methionine = a 1-acyl-2-(9-cyclopronane)-acyl-sn-glycero-3-phospholipid + S-adenosyl-L-homocysteine + H(+). The protein operates within lipid metabolism; mycolic acid biosynthesis. Functionally, catalyzes the conversion of a double bond to a cyclopropane ring at the distal position of an alpha mycolic acid via the transfer of a methylene group from S-adenosyl-L-methionine. Cyclopropanated mycolic acids are key factors participating in cell envelope permeability, host immunomodulation and persistence. The protein is Cyclopropane mycolic acid synthase 1 (cmaA1) of Mycobacterium tuberculosis (strain ATCC 25177 / H37Ra).